Here is a 552-residue protein sequence, read N- to C-terminus: Asparagine--tRNA ligase, cytoplasmic (552 aa).

Residues 1-23 form a disordered region; the sequence is MSQVYVNEKTGADSTDVSGSEQQ. Residues 12–23 are compositionally biased toward polar residues; the sequence is ADSTDVSGSEQQ.

The protein belongs to the class-II aminoacyl-tRNA synthetase family.

The protein resides in the cytoplasm. It catalyses the reaction tRNA(Asn) + L-asparagine + ATP = L-asparaginyl-tRNA(Asn) + AMP + diphosphate + H(+). The polypeptide is Asparagine--tRNA ligase, cytoplasmic (DED81) (Debaryomyces hansenii (strain ATCC 36239 / CBS 767 / BCRC 21394 / JCM 1990 / NBRC 0083 / IGC 2968) (Yeast)).